We begin with the raw amino-acid sequence, 73 residues long: UPF0435 protein OB1527 (73 aa).

Belongs to the UPF0435 family.

The protein is UPF0435 protein OB1527 of Oceanobacillus iheyensis (strain DSM 14371 / CIP 107618 / JCM 11309 / KCTC 3954 / HTE831).